Here is a 398-residue protein sequence, read N- to C-terminus: 1-deoxy-D-xylulose 5-phosphate reductoisomerase (398 aa).

Residues Thr11, Gly12, Ser13, Ile14, Arg38, Asn39, and Asn125 each contribute to the NADPH site. 1-deoxy-D-xylulose 5-phosphate is bound at residue Lys126. Glu127 contacts NADPH. Asp151 is a binding site for Mn(2+). Ser152, Glu153, Ser179, and His202 together coordinate 1-deoxy-D-xylulose 5-phosphate. Residue Glu153 participates in Mn(2+) binding. Gly208 serves as a coordination point for NADPH. Residues Ser215, Asn220, Lys221, and Glu224 each contribute to the 1-deoxy-D-xylulose 5-phosphate site. Residue Glu224 participates in Mn(2+) binding.

It belongs to the DXR family. Requires Mg(2+) as cofactor. The cofactor is Mn(2+).

The enzyme catalyses 2-C-methyl-D-erythritol 4-phosphate + NADP(+) = 1-deoxy-D-xylulose 5-phosphate + NADPH + H(+). It participates in isoprenoid biosynthesis; isopentenyl diphosphate biosynthesis via DXP pathway; isopentenyl diphosphate from 1-deoxy-D-xylulose 5-phosphate: step 1/6. In terms of biological role, catalyzes the NADPH-dependent rearrangement and reduction of 1-deoxy-D-xylulose-5-phosphate (DXP) to 2-C-methyl-D-erythritol 4-phosphate (MEP). The chain is 1-deoxy-D-xylulose 5-phosphate reductoisomerase from Burkholderia mallei (strain NCTC 10247).